The following is a 333-amino-acid chain: O-acetyl transferase (333 aa).

This sequence belongs to the acyltransferase 3 family.

It is found in the host cell inner membrane. Its function is as follows. Antigenically converts S.flexneri serotype X to 3a, Y to 3b, 1a to 1b and 4a to 4b by O-acetylating the O-antigenic polysaccharide chain. The polypeptide is O-acetyl transferase (OAC) (Shigella flexneri (Shigella flexneri bacteriophage VI)).